The following is a 310-amino-acid chain: Tagatose-6-phosphate kinase (310 aa).

The protein belongs to the carbohydrate kinase PfkB family. LacC subfamily.

It carries out the reaction D-tagatofuranose 6-phosphate + ATP = D-tagatofuranose 1,6-bisphosphate + ADP + H(+). It participates in carbohydrate metabolism; D-tagatose 6-phosphate degradation; D-glyceraldehyde 3-phosphate and glycerone phosphate from D-tagatose 6-phosphate: step 1/2. The protein is Tagatose-6-phosphate kinase of Streptococcus uberis (strain ATCC BAA-854 / 0140J).